The sequence spans 141 residues: Large ribosomal subunit protein uL16 (141 aa).

Belongs to the universal ribosomal protein uL16 family. As to quaternary structure, part of the 50S ribosomal subunit.

Its function is as follows. Binds 23S rRNA and is also seen to make contacts with the A and possibly P site tRNAs. In Campylobacter hominis (strain ATCC BAA-381 / DSM 21671 / CCUG 45161 / LMG 19568 / NCTC 13146 / CH001A), this protein is Large ribosomal subunit protein uL16.